We begin with the raw amino-acid sequence, 875 residues long: Valine--tRNA ligase (875 aa).

The 'HIGH' region signature appears at Pro-45–His-55. The short motif at Lys-524–Ser-528 is the 'KMSKS' region element. Lys-527 serves as a coordination point for ATP. The stretch at Val-803 to Glu-837 forms a coiled coil.

Belongs to the class-I aminoacyl-tRNA synthetase family. ValS type 1 subfamily. Monomer.

The protein resides in the cytoplasm. It carries out the reaction tRNA(Val) + L-valine + ATP = L-valyl-tRNA(Val) + AMP + diphosphate. Functionally, catalyzes the attachment of valine to tRNA(Val). As ValRS can inadvertently accommodate and process structurally similar amino acids such as threonine, to avoid such errors, it has a 'posttransfer' editing activity that hydrolyzes mischarged Thr-tRNA(Val) in a tRNA-dependent manner. This chain is Valine--tRNA ligase, found in Borreliella burgdorferi (strain ATCC 35210 / DSM 4680 / CIP 102532 / B31) (Borrelia burgdorferi).